The primary structure comprises 332 residues: tRNA dimethylallyltransferase (332 aa).

Residue 30–37 (GPTAVGKT) coordinates ATP. 32 to 37 (TAVGKT) lines the substrate pocket. The tract at residues 57–60 (DSMQ) is interaction with substrate tRNA.

It belongs to the IPP transferase family. As to quaternary structure, monomer. The cofactor is Mg(2+).

The enzyme catalyses adenosine(37) in tRNA + dimethylallyl diphosphate = N(6)-dimethylallyladenosine(37) in tRNA + diphosphate. Its function is as follows. Catalyzes the transfer of a dimethylallyl group onto the adenine at position 37 in tRNAs that read codons beginning with uridine, leading to the formation of N6-(dimethylallyl)adenosine (i(6)A). This Natranaerobius thermophilus (strain ATCC BAA-1301 / DSM 18059 / JW/NM-WN-LF) protein is tRNA dimethylallyltransferase.